The following is a 513-amino-acid chain: U3 small nucleolar RNA-associated protein 15 (513 aa).

6 WD repeats span residues 37–78, 79–118, 124–162, 166–206, 210–247, and 250–294; these read KEHN…KTFS, RFKD…TILL, THPT…EPQL, GATD…STPI, NHDQ…KLYE, and NFNK…QVKF. Residues 332–354 form a disordered region; sequence KKKEKRSSDKENAPASFNKNAKS.

Interacts with snoRNA U3. Interacts with MPP10. Component of the ribosomal small subunit (SSU) processome composed of at least 40 protein subunits and snoRNA U3. In the absence of snoRNA3, forms a complex with other t-UTPs. This complex can associate with pre-18S ribosomal RNAs.

It is found in the nucleus. The protein localises to the nucleolus. Functionally, involved in nucleolar processing of pre-18S ribosomal RNA. Required for optimal pre-ribosomal RNA transcription by RNA polymerase I together with a subset of U3 proteins required for transcription (t-UTPs). The chain is U3 small nucleolar RNA-associated protein 15 (UTP15) from Saccharomyces cerevisiae (strain ATCC 204508 / S288c) (Baker's yeast).